The chain runs to 249 residues: MSGHNRWSKIKRQKAAMGATKGKLYSKVVKEITVASRLGGGEPSGNARLRVALAAAREANIPKDTIERAIKKGTGELEGENYEEVTYEGYGPGGVAILVECLTDNRNRTAADMRSTFSAYGGNLGAEGAVAWMFQKKGVISVKYGPSEDQLMEQAIDAGAEDVIMLGDEGSEVRTAAADLHTVAGRLQESGLPLGQQRWVFLPQNTVALDVDTVKKLLKLLDALEENDDVQNVHGNYEIEDAMLDSLLQ.

This sequence belongs to the TACO1 family.

Its subcellular location is the cytoplasm. The chain is Probable transcriptional regulatory protein MXAN_4974 from Myxococcus xanthus (strain DK1622).